A 487-amino-acid chain; its full sequence is Probable cobyric acid synthase (487 aa).

In terms of domain architecture, GATase cobBQ-type spans 249-435 (DVDIAVVRFP…LHGIFNNASF (187 aa)). Cys328 (nucleophile) is an active-site residue. His427 is an active-site residue.

The protein belongs to the CobB/CobQ family. CobQ subfamily.

The protein operates within cofactor biosynthesis; adenosylcobalamin biosynthesis. In terms of biological role, catalyzes amidations at positions B, D, E, and G on adenosylcobyrinic A,C-diamide. NH(2) groups are provided by glutamine, and one molecule of ATP is hydrogenolyzed for each amidation. This is Probable cobyric acid synthase from Methanocella arvoryzae (strain DSM 22066 / NBRC 105507 / MRE50).